Consider the following 372-residue polypeptide: 4-hydroxy-3-methylbut-2-en-1-yl diphosphate synthase (flavodoxin) (372 aa).

[4Fe-4S] cluster-binding residues include Cys270, Cys273, Cys305, and Glu312.

The protein belongs to the IspG family. The cofactor is [4Fe-4S] cluster.

It catalyses the reaction (2E)-4-hydroxy-3-methylbut-2-enyl diphosphate + oxidized [flavodoxin] + H2O + 2 H(+) = 2-C-methyl-D-erythritol 2,4-cyclic diphosphate + reduced [flavodoxin]. Its pathway is isoprenoid biosynthesis; isopentenyl diphosphate biosynthesis via DXP pathway; isopentenyl diphosphate from 1-deoxy-D-xylulose 5-phosphate: step 5/6. In terms of biological role, converts 2C-methyl-D-erythritol 2,4-cyclodiphosphate (ME-2,4cPP) into 1-hydroxy-2-methyl-2-(E)-butenyl 4-diphosphate. The polypeptide is 4-hydroxy-3-methylbut-2-en-1-yl diphosphate synthase (flavodoxin) (Alcanivorax borkumensis (strain ATCC 700651 / DSM 11573 / NCIMB 13689 / SK2)).